Here is a 156-residue protein sequence, read N- to C-terminus: Lipoprotein signal peptidase (156 aa).

3 helical membrane passes run 5 to 25, 63 to 83, and 90 to 110; these read FFVV…TKQW, IEWQ…AIIA, and SNPY…GNLI. Catalysis depends on residues D120 and D138. The chain crosses the membrane as a helical span at residues 133–153; the sequence is AFNVADMGICVGAFFVCLAVY.

The protein belongs to the peptidase A8 family.

It is found in the cell inner membrane. It catalyses the reaction Release of signal peptides from bacterial membrane prolipoproteins. Hydrolyzes -Xaa-Yaa-Zaa-|-(S,diacylglyceryl)Cys-, in which Xaa is hydrophobic (preferably Leu), and Yaa (Ala or Ser) and Zaa (Gly or Ala) have small, neutral side chains.. Its pathway is protein modification; lipoprotein biosynthesis (signal peptide cleavage). This protein specifically catalyzes the removal of signal peptides from prolipoproteins. This chain is Lipoprotein signal peptidase, found in Oleidesulfovibrio alaskensis (strain ATCC BAA-1058 / DSM 17464 / G20) (Desulfovibrio alaskensis).